Consider the following 396-residue polypeptide: Actin-related protein 6 (396 aa).

Residue Thr2 is modified to N-acetylthreonine. Lys260 carries the N6-acetyllysine modification.

It belongs to the actin family. ARP6 subfamily. As to quaternary structure, component of the chromatin-remodeling SRCAP complex composed of at least SRCAP, DMAP1, RUVBL1, RUVBL2, ACTL6A, YEATS4, ACTR6 and ZNHIT1. Interacts with CBX1, CBX3 and CBX5.

It is found in the cytoplasm. Its subcellular location is the cytoskeleton. It localises to the nucleus. The protein localises to the nucleolus. Required for formation and/or maintenance of proper nucleolar structure and function. Plays a dual role in the regulation of ribosomal DNA (rDNA) transcription. In the presence of high glucose, maintains active rDNA transcription through H2A.Z deposition and under glucose starvation, is required for the repression of rDNA transcription, and this function may be independent of H2A.Z. This Mus musculus (Mouse) protein is Actin-related protein 6 (Actr6).